A 431-amino-acid chain; its full sequence is O-methyltransferase xanE (431 aa).

S-adenosyl-L-methionine is bound at residue aspartate 283. Histidine 330 (proton acceptor) is an active-site residue.

Belongs to the class I-like SAM-binding methyltransferase superfamily. Cation-independent O-methyltransferase family.

Its pathway is secondary metabolite biosynthesis. O-methyltransferase; part of the gene cluster that mediates the biosynthesis of the isocyanide xanthocillin and its derivatives. The first step of the pathway consists in the conversion of tyrosine into a vinyl-isonitrile intermediate by the isocyanide synthase xanB. Subsequent oxidative dimerization of this intermediate to form xanthocillin may involve the cytochrome P450 monooxygenase xanG, whose expression is coregulated with that of XanB. Xanthocillin can be further modified by the isonitrile hydratase-like protein xanA which introduces N-formyl groups and the methyltransferase xanE which introduces methyl groups, leading to the production of several derivatives including fumiformamide. Finally, fumiformamide can be subject to both oxidative and reductive cyclization to yield melanocins E and F, respectively. This is O-methyltransferase xanE from Aspergillus fumigatus (strain ATCC MYA-4609 / CBS 101355 / FGSC A1100 / Af293) (Neosartorya fumigata).